The sequence spans 561 residues: Acylcarnitine hydrolase (561 aa).

Residues Met-1–Gly-26 form the signal peptide. Cys-97 and Cys-125 are oxidised to a cystine. Catalysis depends on Ser-230, which acts as the Acyl-ester intermediate. The cysteines at positions 282 and 293 are disulfide-linked. Active-site charge relay system residues include Glu-347 and His-459. The Prevents secretion from ER signature appears at His-558–Leu-561.

It belongs to the type-B carboxylesterase/lipase family. As to expression, detected in liver (at protein level).

The protein localises to the microsome. The protein resides in the endoplasmic reticulum. It catalyses the reaction an O-acyl-(R)-carnitine + H2O = (R)-carnitine + a fatty acid + H(+). The enzyme catalyses all-trans-retinyl hexadecanoate + H2O = all-trans-retinol + hexadecanoate + H(+). Its function is as follows. Hydrolase with high activity towards palmitoylcarnitine. Is also active with p-nitrophenylacetate and alpha-naphthylacetate. May also hydrolyze retinyl esters. The polypeptide is Acylcarnitine hydrolase (Mus musculus (Mouse)).